A 152-amino-acid chain; its full sequence is D-erythrulose-4-phosphate isomerase (152 aa).

Cys67 (proton acceptor) is an active-site residue.

This sequence belongs to the LacAB/RpiB family.

The enzyme catalyses D-erythrulose 4-phosphate = D-erythrose 4-phosphate. It functions in the pathway carbohydrate metabolism. Involved in catabolism of D-apiose. Catalyzes the isomerization of D-erythrulose 4-phosphate to D-erythrose 4-phosphate. In Pectobacterium atrosepticum (strain SCRI 1043 / ATCC BAA-672) (Erwinia carotovora subsp. atroseptica), this protein is D-erythrulose-4-phosphate isomerase.